Consider the following 389-residue polypeptide: Succinate--CoA ligase [ADP-forming] subunit beta (389 aa).

Positions 9–244 constitute an ATP-grasp domain; the sequence is KQLFAEYGLP…PSQEDEREAH (236 aa). Residues Lys-46, 53-55, Glu-99, Thr-102, and Glu-107 each bind ATP; that span reads GRG. Residues Asn-199 and Asp-213 each contribute to the Mg(2+) site. Residues Asn-264 and 321–323 each bind substrate; that span reads GIV.

Belongs to the succinate/malate CoA ligase beta subunit family. In terms of assembly, heterotetramer of two alpha and two beta subunits. Mg(2+) serves as cofactor.

It catalyses the reaction succinate + ATP + CoA = succinyl-CoA + ADP + phosphate. The enzyme catalyses GTP + succinate + CoA = succinyl-CoA + GDP + phosphate. The protein operates within carbohydrate metabolism; tricarboxylic acid cycle; succinate from succinyl-CoA (ligase route): step 1/1. Its function is as follows. Succinyl-CoA synthetase functions in the citric acid cycle (TCA), coupling the hydrolysis of succinyl-CoA to the synthesis of either ATP or GTP and thus represents the only step of substrate-level phosphorylation in the TCA. The beta subunit provides nucleotide specificity of the enzyme and binds the substrate succinate, while the binding sites for coenzyme A and phosphate are found in the alpha subunit. The polypeptide is Succinate--CoA ligase [ADP-forming] subunit beta (Teredinibacter turnerae (strain ATCC 39867 / T7901)).